A 1108-amino-acid chain; its full sequence is Probable E3 ubiquitin ligase SUD1 (1108 aa).

The tract at residues 1–60 (MEISPADSLSISGAAASEVVSEPSVSSSSSSSSPNQASPNPFSNMDPAVSTATGSRYVDD) is disordered. The span at 10–44 (SISGAAASEVVSEPSVSSSSSSSSPNQASPNPFSN) shows a compositional bias: low complexity. The RING-CH-type zinc-finger motif lies at 60-121 (DDEDEEDVCR…EVCKHPFSFS (62 aa)). Residues cysteine 68, cysteine 71, cysteine 85, cysteine 87, histidine 95, cysteine 98, cysteine 111, and cysteine 114 each coordinate Zn(2+). 2 helical membrane-spanning segments follow: residues 157 to 177 (FVLSVWLLTIPFITFWIWRLA) and 197 to 217 (VILTDCLHGFLLSASIVFIFL). A compositionally biased stretch (basic and acidic residues) spans 237–246 (ERDDDVDRNG). The tract at residues 237 to 273 (ERDDDVDRNGARAARRPAGQANRNLAGEGNGEDAGDQ) is disordered. Residues 286-308 (ENVLARLDIQAARLEAQVEQMFD) adopt a coiled-coil conformation. A run of 8 helical transmembrane segments spans residues 339–359 (FTVLASNMIFLGVVIFVPFTL), 362–382 (IILYHVSWLFAAARGPAVAAS), 462–482 (AVGYMFIVFLVFLYLGIIALI), 489–509 (PLTVGRFYGIASIVEAVPSLL), 525–545 (VAFLLVIELGVFPLMCGWWLD), 572–592 (LVHWVVGIMYMLQISIFVSLL), 630–650 (VLLSVAVYGSLIVMLVFLPVK), and 669–689 (PFTEIPADMLLFQICIPFIIE). Residues 762 to 784 (PNRSRLRAGNVNTGEEYEDDDEQ) are disordered. The next 6 membrane-spanning stretches (helical) occupy residues 796–816 (IILLLLVAWVTLLLFNSALIV), 844–864 (YAFVIGTYAFWTTISGARYAI), 894–914 (AIWVFIIPVLIGLLFELLVIV), 923–943 (SPVFLLYQDWALGLIFLKIWT), 982–1002 (EIVFPIVMKLLTALCVPYVLA), and 1017–1036 (SAVYRFAWIGCLSVSLFCFC).

As to expression, expressed in cotyledons, leaves, roots, stems, inflorescences and siliques. Expression higher at the top than at the base of the stem.

The protein resides in the membrane. The catalysed reaction is S-ubiquitinyl-[E2 ubiquitin-conjugating enzyme]-L-cysteine + [acceptor protein]-L-lysine = [E2 ubiquitin-conjugating enzyme]-L-cysteine + N(6)-ubiquitinyl-[acceptor protein]-L-lysine.. The protein operates within protein modification; protein ubiquitination. Functionally, probable E3 ubiquitin ligase acting as a positive post-transcriptional regulator of 3-hydroxy-3-methylglutaryl-coenzyme A reductase activity. Might be involved in the quality control that degrades misfolded proteins. The polypeptide is Probable E3 ubiquitin ligase SUD1 (SUD1) (Arabidopsis thaliana (Mouse-ear cress)).